The primary structure comprises 803 residues: Homeobox protein Wariai (803 aa).

Over residues 23 to 41 (SDYDSYEQQYNNPTGSKQY) the composition is skewed to polar residues. The disordered stretch occupies residues 23-144 (SDYDSYEQQY…PTPYSSNSFS (122 aa)). The segment covering 42-124 (NNNNNNNTNT…NNNNNNNNNN (83 aa)) has biased composition (low complexity). The span at 125–138 (QHLSQSQQLSPTPY) shows a compositional bias: polar residues. Positions 162–221 (SKKKRKRTSPDQLKLLEKIFMAHQHPNLNLRSQLAVELHMTARSVQIWFQNRRAKARNME) form a DNA-binding region, homeobox. The segment at 288–330 (INGNMGGGGGGGGGSHNHHHHNHNHNHHNHNHNHNHNQPLSNG) is disordered. Residues 291-302 (NMGGGGGGGGGS) are compositionally biased toward gly residues. Basic residues predominate over residues 303-322 (HNHHHHNHNHNHHNHNHNHN). 9 ANK repeats span residues 374-403 (KGLSLLFTAAFLGYEYQVRRLIESGANPNI), 407-436 (QGNTPLIAASVLGNQPIVELLLEHRADPNL), 440-469 (EGVSPLFSACKGGHLQIASSLLDHDAEVSV), 474-503 (NGETPLHIASLKGFEKICKLLIETEAKASV), 507-536 (NNRTPLHHACIMGYFSIAKLLICNGADMNA), 540-569 (DGHTPLHTSSLMGHDLITRLLLENGADPNI), 573-602 (EGYTPIHYAVRESRIETVKFLIKFNSKLNI), 606-636 (NGQNLIHLSVQFASLMMGQMIFESKGCEIAA), and 642-671 (QGYTPLYLAAKAGKTNFVKYLLSKGASKKI). The segment at 695–760 (KSSNNNNSNS…PPGNKFEEDD (66 aa)) is disordered. Residues 696–746 (SSNNNNSNSNINNINNINNINNINSQPNTNSDNNNNNNNNNFNENYSNGNN) show a composition bias toward low complexity.

The protein resides in the nucleus. In terms of biological role, putative transcription factor, that seems to be involved in anterior-posterior patterning of the slug, probably by controlling the proportions of prestalk and prespore cells. The chain is Homeobox protein Wariai (warA) from Dictyostelium discoideum (Social amoeba).